The sequence spans 177 residues: UBA-like domain-containing protein 1 (177 aa).

The disordered stretch occupies residues Glu89–Arg177. Over residues Pro112 to Gln138 the composition is skewed to low complexity. The span at Pro139–Pro151 shows a compositional bias: pro residues. The span at Pro167–Arg177 shows a compositional bias: basic and acidic residues.

Belongs to the UBALD family.

The sequence is that of UBA-like domain-containing protein 1 (UBALD1) from Homo sapiens (Human).